Here is a 156-residue protein sequence, read N- to C-terminus: Probable low-salt glycan biosynthesis epimerase Agl13 (156 aa).

Substrate contacts are provided by residues arginine 19, glutamate 24, 39–41 (MSY), arginine 51, histidine 54, and histidine 109.

The protein belongs to the dTDP-4-dehydrorhamnose 3,5-epimerase family.

It participates in protein modification; protein glycosylation. The protein operates within cell surface structure biogenesis; S-layer biogenesis. Functionally, epimerase involved in N-glycan biosynthetic pathway that takes place under low-salt conditions (1.75 M instead of 3.4 M). Participates in the formation of the tetrasaccharide present at 'Asn-532' of S-layer glycoprotein Csg, consisting of a sulfated hexose, 2 hexoses and rhamnose. Involved in the addition of final rhamnose (sugar 4) of the tetrasaccharide on the dolichol phosphate carrier. The polypeptide is Probable low-salt glycan biosynthesis epimerase Agl13 (agl13) (Haloferax volcanii (strain ATCC 29605 / DSM 3757 / JCM 8879 / NBRC 14742 / NCIMB 2012 / VKM B-1768 / DS2) (Halobacterium volcanii)).